The following is a 119-amino-acid chain: Large ribosomal subunit protein uL14 (119 aa).

It belongs to the universal ribosomal protein uL14 family. Part of the 50S ribosomal subunit. Forms a cluster with proteins L3 and L19. In the 70S ribosome, L14 and L19 interact and together make contacts with the 16S rRNA in bridges B5 and B8.

Functionally, binds to 23S rRNA. Forms part of two intersubunit bridges in the 70S ribosome. The sequence is that of Large ribosomal subunit protein uL14 from Anaplasma marginale (strain St. Maries).